Reading from the N-terminus, the 311-residue chain is tRNA-cytidine(32) 2-sulfurtransferase (311 aa).

The PP-loop motif signature appears at 47–52 (SGGKDS). Positions 122, 125, and 213 each coordinate [4Fe-4S] cluster.

This sequence belongs to the TtcA family. As to quaternary structure, homodimer. It depends on Mg(2+) as a cofactor. The cofactor is [4Fe-4S] cluster.

It localises to the cytoplasm. It catalyses the reaction cytidine(32) in tRNA + S-sulfanyl-L-cysteinyl-[cysteine desulfurase] + AH2 + ATP = 2-thiocytidine(32) in tRNA + L-cysteinyl-[cysteine desulfurase] + A + AMP + diphosphate + H(+). It participates in tRNA modification. Catalyzes the ATP-dependent 2-thiolation of cytidine in position 32 of tRNA, to form 2-thiocytidine (s(2)C32). The sulfur atoms are provided by the cysteine/cysteine desulfurase (IscS) system. The sequence is that of tRNA-cytidine(32) 2-sulfurtransferase from Escherichia coli O81 (strain ED1a).